Reading from the N-terminus, the 268-residue chain is Tryptophan synthase alpha chain (268 aa).

Residues glutamate 49 and aspartate 60 each act as proton acceptor in the active site.

The protein belongs to the TrpA family. As to quaternary structure, tetramer of two alpha and two beta chains.

The catalysed reaction is (1S,2R)-1-C-(indol-3-yl)glycerol 3-phosphate + L-serine = D-glyceraldehyde 3-phosphate + L-tryptophan + H2O. Its pathway is amino-acid biosynthesis; L-tryptophan biosynthesis; L-tryptophan from chorismate: step 5/5. In terms of biological role, the alpha subunit is responsible for the aldol cleavage of indoleglycerol phosphate to indole and glyceraldehyde 3-phosphate. The chain is Tryptophan synthase alpha chain from Citrobacter koseri (strain ATCC BAA-895 / CDC 4225-83 / SGSC4696).